Consider the following 443-residue polypeptide: UPF0597 protein Dvul_2496 (443 aa).

A disordered region spans residues 156 to 178 (GMERAPEADGTLHGGASCEPSAS).

It belongs to the UPF0597 family.

This Nitratidesulfovibrio vulgaris (strain DP4) (Desulfovibrio vulgaris) protein is UPF0597 protein Dvul_2496.